The chain runs to 85 residues: Translation initiation factor IF-1 2 (85 aa).

The S1-like domain maps to 1 to 72; sequence MAKEELIEMQ…TKGRITFRHL (72 aa).

The protein belongs to the IF-1 family. As to quaternary structure, component of the 30S ribosomal translation pre-initiation complex which assembles on the 30S ribosome in the order IF-2 and IF-3, IF-1 and N-formylmethionyl-tRNA(fMet); mRNA recruitment can occur at any time during PIC assembly.

The protein resides in the cytoplasm. One of the essential components for the initiation of protein synthesis. Stabilizes the binding of IF-2 and IF-3 on the 30S subunit to which N-formylmethionyl-tRNA(fMet) subsequently binds. Helps modulate mRNA selection, yielding the 30S pre-initiation complex (PIC). Upon addition of the 50S ribosomal subunit IF-1, IF-2 and IF-3 are released leaving the mature 70S translation initiation complex. The sequence is that of Translation initiation factor IF-1 2 from Paracidovorax citrulli (strain AAC00-1) (Acidovorax citrulli).